Here is an 82-residue protein sequence, read N- to C-terminus: uncharacterized protein (82 aa).

2 helical membrane-spanning segments follow: residues 32–52 (PFSI…IGIL) and 59–79 (SKPL…FNII).

It is found in the cell membrane. This is an uncharacterized protein from Rickettsia prowazekii (strain Madrid E).